A 397-amino-acid polypeptide reads, in one-letter code: Phosphoglycerate kinase (397 aa).

Substrate is bound by residues D22–N24, R37, H60–R63, R119, and R152. ATP contacts are provided by residues K202, E324, and G354 to T357.

This sequence belongs to the phosphoglycerate kinase family. Monomer.

It localises to the cytoplasm. The catalysed reaction is (2R)-3-phosphoglycerate + ATP = (2R)-3-phospho-glyceroyl phosphate + ADP. Its pathway is carbohydrate degradation; glycolysis; pyruvate from D-glyceraldehyde 3-phosphate: step 2/5. The sequence is that of Phosphoglycerate kinase (pgk) from Zymomonas mobilis subsp. mobilis (strain ATCC 31821 / ZM4 / CP4).